A 137-amino-acid chain; its full sequence is NADH-quinone oxidoreductase subunit A 2 (137 aa).

3 consecutive transmembrane segments (helical) span residues 12–32 (WGFAAFLLGVVGLLAFMLGVS), 66–86 (FYLVAMLFVIFDVEALFLFAW), and 95–115 (WAGLIEATIFIAILLAGLVYL).

Belongs to the complex I subunit 3 family. In terms of assembly, NDH-1 is composed of 13 different subunits. Subunits NuoA, H, J, K, L, M, N constitute the membrane sector of the complex.

The protein resides in the cell inner membrane. It carries out the reaction a quinone + NADH + 5 H(+)(in) = a quinol + NAD(+) + 4 H(+)(out). Functionally, NDH-1 shuttles electrons from NADH, via FMN and iron-sulfur (Fe-S) centers, to quinones in the respiratory chain. The immediate electron acceptor for the enzyme in this species is believed to be ubiquinone. Couples the redox reaction to proton translocation (for every two electrons transferred, four hydrogen ions are translocated across the cytoplasmic membrane), and thus conserves the redox energy in a proton gradient. The sequence is that of NADH-quinone oxidoreductase subunit A 2 from Pseudomonas aeruginosa (strain ATCC 15692 / DSM 22644 / CIP 104116 / JCM 14847 / LMG 12228 / 1C / PRS 101 / PAO1).